Here is a 560-residue protein sequence, read N- to C-terminus: Chaperonin GroEL 2 (560 aa).

ATP is bound by residues 29-32, lysine 50, 86-90, glycine 414, and aspartate 494; these read TLGP and DGTTT. Residues 524-546 form a disordered region; it reads EDEDDDDGGGGGGGGMPAGGAGG. The span at 532-546 shows a compositional bias: gly residues; that stretch reads GGGGGGGMPAGGAGG.

The protein belongs to the chaperonin (HSP60) family. Forms a cylinder of 14 subunits composed of two heptameric rings stacked back-to-back. Interacts with the co-chaperonin GroES.

It localises to the cytoplasm. It carries out the reaction ATP + H2O + a folded polypeptide = ADP + phosphate + an unfolded polypeptide.. Functionally, together with its co-chaperonin GroES, plays an essential role in assisting protein folding. The GroEL-GroES system forms a nano-cage that allows encapsulation of the non-native substrate proteins and provides a physical environment optimized to promote and accelerate protein folding. The sequence is that of Chaperonin GroEL 2 from Salinibacter ruber (strain DSM 13855 / M31).